The following is a 313-amino-acid chain: GTP cyclohydrolase 1 (313 aa).

A compositionally biased stretch (basic and acidic residues) spans M1–S10. Positions M1–E120 are disordered. Residues D11 to P20 are compositionally biased toward low complexity. A compositionally biased stretch (basic residues) spans K29–H39. The span at S40–S64 shows a compositional bias: basic and acidic residues. Residues T72–I102 are compositionally biased toward low complexity. The Zn(2+) site is built by C202, H205, and C273.

Belongs to the GTP cyclohydrolase I family. As to quaternary structure, toroid-shaped homodecamer, composed of two pentamers of five dimers.

The catalysed reaction is GTP + H2O = 7,8-dihydroneopterin 3'-triphosphate + formate + H(+). It participates in cofactor biosynthesis; 7,8-dihydroneopterin triphosphate biosynthesis; 7,8-dihydroneopterin triphosphate from GTP: step 1/1. Its activity is regulated as follows. GTP shows a positive allosteric effect, and tetrahydrobiopterin inhibits the enzyme activity. GTP cyclohydrolase 1 is the first enzyme in the biosynthetic pathway leading to folic acid. This chain is GTP cyclohydrolase 1 (gch-1), found in Neurospora crassa (strain ATCC 24698 / 74-OR23-1A / CBS 708.71 / DSM 1257 / FGSC 987).